Reading from the N-terminus, the 123-residue chain is Keratin-associated protein 2-2 (123 aa).

The segment at 5–112 (CCGSTFSSLS…SVQSPCGQPT (108 aa)) is 11 X 5 AA repeats of C-C-[CDPQRWG]-[APRS]-[CIPSTVD].

The protein belongs to the KRTAP type 2 family. Interacts with hair keratins.

Functionally, in the hair cortex, hair keratin intermediate filaments are embedded in an interfilamentous matrix, consisting of hair keratin-associated proteins (KRTAP), which are essential for the formation of a rigid and resistant hair shaft through their extensive disulfide bond cross-linking with abundant cysteine residues of hair keratins. The matrix proteins include the high-sulfur and high-glycine-tyrosine keratins. This chain is Keratin-associated protein 2-2 (KRTAP2-2), found in Homo sapiens (Human).